The chain runs to 1755 residues: Transposon Ty1-ML1 Gag-Pol polyprotein (1755 aa).

Composition is skewed to polar residues over residues 1–23 (MESQQLSNYPNISHGSACASVTS), 48–60 (TKANSQQTTTPAS), and 127–152 (QSQFPQYPSSVGTPLSTPSPESGNTF). Disordered stretches follow at residues 1-88 (MESQ…YPQQ), 126-173 (PQSQ…RPPP), and 352-421 (GSRN…SKST). Positions 153–165 (TDSSSADSDMTST) are enriched in low complexity. The segment at 299–401 (NNGIHINNKV…NSKSKTARAH (103 aa)) is RNA-binding. Low complexity predominate over residues 402 to 418 (NVSTSNNSPSTDNDSIS). Aspartate 461 (for protease activity; shared with dimeric partner) is an active-site residue. The interval 583–640 (NVHTSESTRKYPYPFIHRMLAHANAQTIRYSLKNNTITYFNESDVDWSSAIDYQCPDC) is integrase-type zinc finger-like. One can recognise an Integrase catalytic domain in the interval 660 to 835 (NSYEPFQYLH…AGLDISTLLP (176 aa)). Aspartate 671 and aspartate 736 together coordinate Mg(2+). 3 disordered regions span residues 956–1087 (SKAV…ETEK), 1092–1111 (RSPSIDASPPENNSSHNIVP), and 1130–1171 (DLPL…DSNA). A compositionally biased stretch (low complexity) spans 960–969 (SPTDSTPPST). Polar residues predominate over residues 1005–1015 (STPQISNIEST). Positions 1038 to 1053 (ESSHASKSKDFRHSDS) are enriched in basic and acidic residues. Composition is skewed to polar residues over residues 1054-1082 (YSENETNHTNVPISSTGGTNNKTVPQISD) and 1101-1111 (PENNSSHNIVP). Residues 1178 to 1212 (KKRSLEDNETEIKVSRDTWNTKNMRSLEPPRSKKR) carry the Bipartite nuclear localization signal motif. Residues 1338 to 1476 (NNYYITQLDI…DILGLEIKYQ (139 aa)) enclose the Reverse transcriptase Ty1/copia-type domain. Residues aspartate 1346, aspartate 1427, aspartate 1428, aspartate 1610, glutamate 1652, and aspartate 1685 each contribute to the Mg(2+) site. The RNase H Ty1/copia-type domain occupies 1610–1752 (DASYGNQPYY…IKTFKLLTNK (143 aa)).

In terms of assembly, the capsid protein forms a homotrimer, from which the VLPs are assembled. The protease is a homodimer, whose active site consists of two apposed aspartic acid residues. Post-translationally, initially, virus-like particles (VLPs) are composed of the structural unprocessed proteins Gag and Gag-Pol, and also contain the host initiator methionine tRNA (tRNA(i)-Met) which serves as a primer for minus-strand DNA synthesis, and a dimer of genomic Ty RNA. Processing of the polyproteins occurs within the particle and proceeds by an ordered pathway, called maturation. First, the protease (PR) is released by autocatalytic cleavage of the Gag-Pol polyprotein yielding capsid protein p45 and a Pol-p154 precursor protein. This cleavage is a prerequisite for subsequent processing of Pol-p154 at the remaining sites to release the mature structural and catalytic proteins. Maturation takes place prior to the RT reaction and is required to produce transposition-competent VLPs.

It localises to the cytoplasm. The protein localises to the nucleus. The enzyme catalyses DNA(n) + a 2'-deoxyribonucleoside 5'-triphosphate = DNA(n+1) + diphosphate. The catalysed reaction is Endonucleolytic cleavage to 5'-phosphomonoester.. Functionally, capsid protein (CA) is the structural component of the virus-like particle (VLP), forming the shell that encapsulates the retrotransposons dimeric RNA genome. The particles are assembled from trimer-clustered units and there are holes in the capsid shells that allow for the diffusion of macromolecules. CA also has nucleocapsid-like chaperone activity, promoting primer tRNA(i)-Met annealing to the multipartite primer-binding site (PBS), dimerization of Ty1 RNA and initiation of reverse transcription. In terms of biological role, the aspartyl protease (PR) mediates the proteolytic cleavages of the Gag and Gag-Pol polyproteins after assembly of the VLP. Its function is as follows. Reverse transcriptase/ribonuclease H (RT) is a multifunctional enzyme that catalyzes the conversion of the retro-elements RNA genome into dsDNA within the VLP. The enzyme displays a DNA polymerase activity that can copy either DNA or RNA templates, and a ribonuclease H (RNase H) activity that cleaves the RNA strand of RNA-DNA heteroduplexes during plus-strand synthesis and hydrolyzes RNA primers. The conversion leads to a linear dsDNA copy of the retrotransposon that includes long terminal repeats (LTRs) at both ends. Integrase (IN) targets the VLP to the nucleus, where a subparticle preintegration complex (PIC) containing at least integrase and the newly synthesized dsDNA copy of the retrotransposon must transit the nuclear membrane. Once in the nucleus, integrase performs the integration of the dsDNA into the host genome. The polypeptide is Transposon Ty1-ML1 Gag-Pol polyprotein (TY1B-ML1) (Saccharomyces cerevisiae (strain ATCC 204508 / S288c) (Baker's yeast)).